Here is a 262-residue protein sequence, read N- to C-terminus: Type III pantothenate kinase (262 aa).

9 to 16 is an ATP binding site; sequence DAGNSRIK. Substrate is bound by residues Tyr-96 and 103–106; that span reads GSDR. Catalysis depends on Asp-105, which acts as the Proton acceptor. Thr-129 contributes to the ATP binding site. Residue Thr-189 coordinates substrate.

This sequence belongs to the type III pantothenate kinase family. In terms of assembly, homodimer. NH4(+) is required as a cofactor. It depends on K(+) as a cofactor.

Its subcellular location is the cytoplasm. The enzyme catalyses (R)-pantothenate + ATP = (R)-4'-phosphopantothenate + ADP + H(+). It participates in cofactor biosynthesis; coenzyme A biosynthesis; CoA from (R)-pantothenate: step 1/5. Functionally, catalyzes the phosphorylation of pantothenate (Pan), the first step in CoA biosynthesis. This Burkholderia ambifaria (strain MC40-6) protein is Type III pantothenate kinase.